The primary structure comprises 508 residues: DDB1- and CUL4-associated factor 10 (508 aa).

A disordered region spans residues 1–75; sequence MSSGHPSDNE…GSASGSGCRG (75 aa). Residues 7–17 are compositionally biased toward basic and acidic residues; sequence SDNEEPRADLL. Acidic residues predominate over residues 18-32; the sequence is REEEEEEEEEEDSDE. The segment covering 63–75 has biased composition (gly residues); sequence GGTGSASGSGCRG. WD repeat units follow at residues 126–165, 169–207, 211–250, and 256–295; these read QTHG…HIKT, AHED…SKVC, GHAS…EDGC, and FHTR…QSLE. The segment at 307-343 is disordered; sequence PPLSTEGSSAGSRSGGPRHTIDNKNHPHREGLSPRNS. The span at 325–338 shows a compositional bias: basic and acidic residues; it reads HTIDNKNHPHREGL. WD repeat units follow at residues 356-396, 419-457, and 475-508; these read DRGN…QEGA, VGRG…AELV, and SHSD…QPHF.

It belongs to the WD repeat DCAF10 family.

The protein operates within protein modification; protein ubiquitination. Its function is as follows. May function as a substrate receptor for CUL4-DDB1 E3 ubiquitin-protein ligase complex. This chain is DDB1- and CUL4-associated factor 10 (dcaf10), found in Danio rerio (Zebrafish).